The primary structure comprises 647 residues: Chaperone protein DnaK (647 aa).

Phosphothreonine; by autocatalysis is present on threonine 198. Composition is skewed to basic and acidic residues over residues 514-529, 540-557, and 600-622; these read AEANKEEDKKKRESVD, STEKNLKEHGAKVSDADK, and SQEKKEGSPKEGDKNDEGKKDDN. Disordered stretches follow at residues 514-557 and 596-647; these read AEAN…DADK and AIYK…EKSA. The segment covering 623-632 has biased composition (acidic residues); the sequence is VVDADFEEVK. Residues 633-647 show a composition bias toward basic and acidic residues; sequence EESKEGKEEDKEKSA.

Belongs to the heat shock protein 70 family.

In terms of biological role, acts as a chaperone. The polypeptide is Chaperone protein DnaK (Pelagibacter ubique (strain HTCC1062)).